The primary structure comprises 239 residues: MSNELLTIDPVDLQFPFELKKQISCSLYLGNKTDNYVAFKVKTTNPKKYCVRPNTGVVHPRSSSEVLVTMQAQKEAPADLQCKDKFLLQCVVASPGATPKDVTHEMFSKEAGHRVEETKLRVVYVAPPRPPSPVREGSEEGSSPRASVSDNGNASDFTAAPRFSADRVDAQDNSSEARALVTKLTEEKNSAVQLNNRLQQELDQLRRESKRSKSGGIPFMYVLLVGLIGLILGYIMKRT.

Met-1 carries the N-acetylmethionine modification. The Cytoplasmic segment spans residues 1–215 (MSNELLTIDP…RRESKRSKSG (215 aa)). The residue at position 2 (Ser-2) is an N-acetylserine; in Vesicle-associated protein 1-2, N-terminally processed. One can recognise an MSP domain in the interval 5-125 (LLTIDPVDLQ…EETKLRVVYV (121 aa)). Residues 123-174 (VYVAPPRPPSPVREGSEEGSSPRASVSDNGNASDFTAAPRFSADRVDAQDNS) form a disordered region. At Ser-132 the chain carries Phosphoserine. The segment covering 140–156 (EGSSPRASVSDNGNASD) has biased composition (polar residues). Ser-164 is subject to Phosphoserine. Positions 169–215 (DAQDNSSEARALVTKLTEEKNSAVQLNNRLQQELDQLRRESKRSKSG) form a coiled coil. The helical; Anchor for type IV membrane protein transmembrane segment at 216-236 (GIPFMYVLLVGLIGLILGYIM) threads the bilayer.

The protein belongs to the VAMP-associated protein (VAP) (TC 9.B.17) family. As to quaternary structure, interacts with ORP3A. Binds to VLG at the endomembrane system.

The protein resides in the endoplasmic reticulum membrane. Functionally, vesicle-associated protein that binds the oxysterol-binding protein ORP3A and allows its targeting to the ER. This Arabidopsis thaliana (Mouse-ear cress) protein is Vesicle-associated protein 1-2.